Reading from the N-terminus, the 644-residue chain is Exoribonuclease 2 (644 aa).

One can recognise an RNB domain in the interval 189 to 516 (RQDLTALNFV…NHRLLKAVIK (328 aa)). The S1 motif domain occupies 561 to 643 (DTRFAAEIID…DTRSIIARPA (83 aa)).

It belongs to the RNR ribonuclease family. RNase II subfamily.

The protein localises to the cytoplasm. It catalyses the reaction Exonucleolytic cleavage in the 3'- to 5'-direction to yield nucleoside 5'-phosphates.. Its function is as follows. Involved in mRNA degradation. Hydrolyzes single-stranded polyribonucleotides processively in the 3' to 5' direction. In Salmonella arizonae (strain ATCC BAA-731 / CDC346-86 / RSK2980), this protein is Exoribonuclease 2.